Consider the following 316-residue polypeptide: Tyrosine recombinase XerC (316 aa).

One can recognise a Core-binding (CB) domain in the interval 11 to 97; it reads SGLRKPLDQF…SLRSFFDFLI (87 aa). A Tyr recombinase domain is found at 118 to 298; sequence PLPKNLDVDE…DFQHLADVYD (181 aa). Active-site residues include R157, K181, H250, R253, and H276. The active-site O-(3'-phospho-DNA)-tyrosine intermediate is the Y285.

The protein belongs to the 'phage' integrase family. XerC subfamily. As to quaternary structure, forms a cyclic heterotetrameric complex composed of two molecules of XerC and two molecules of XerD.

It localises to the cytoplasm. Functionally, site-specific tyrosine recombinase, which acts by catalyzing the cutting and rejoining of the recombining DNA molecules. The XerC-XerD complex is essential to convert dimers of the bacterial chromosome into monomers to permit their segregation at cell division. It also contributes to the segregational stability of plasmids. The chain is Tyrosine recombinase XerC from Vibrio vulnificus (strain CMCP6).